The following is a 299-amino-acid chain: Homoserine kinase (299 aa).

88 to 98 (PLGRGLGSSAT) provides a ligand contact to ATP.

It belongs to the GHMP kinase family. Homoserine kinase subfamily.

The protein localises to the cytoplasm. The catalysed reaction is L-homoserine + ATP = O-phospho-L-homoserine + ADP + H(+). The protein operates within amino-acid biosynthesis; L-threonine biosynthesis; L-threonine from L-aspartate: step 4/5. Functionally, catalyzes the ATP-dependent phosphorylation of L-homoserine to L-homoserine phosphate. This Gloeobacter violaceus (strain ATCC 29082 / PCC 7421) protein is Homoserine kinase.